A 759-amino-acid polypeptide reads, in one-letter code: Protein hunchback (759 aa).

Disordered stretches follow at residues 30–51 and 171–215; these read EPGH…PIPS and SSEK…EDMK. A compositionally biased stretch (polar residues) spans 39 to 51; that stretch reads SVASSPRQSPIPS. Threonine 179 bears the Phosphothreonine mark. A phosphoserine mark is found at serine 189, serine 208, serine 210, and serine 211. Residues 199–215 are compositionally biased toward basic and acidic residues; sequence EPEKEHDQMSNSSEDMK. 4 consecutive C2H2-type zinc fingers follow at residues 241–263, 270–292, 298–320, and 326–350; these read YKCK…TRTH, LQCP…IRKH, FQCD…RKSH, and YRCA…KYGH. 3 disordered regions span residues 366-419, 513-565, and 606-696; these read LVID…TSQL, QLQQ…PQQP, and MTSP…APAS. 2 stretches are compositionally biased toward low complexity: residues 399–419 and 513–522; these read VAAV…TSQL and QLQQQNQQQS. Residues 523-532 show a composition bias toward acidic residues; it reads DNEEEEQDDE. Residues serine 537 and serine 540 each carry the phosphoserine modification. Residues 655–696 show a composition bias toward low complexity; it reads ANTSASSTASSSGNSSNASSNGNSSSNSSSNGTSSAAAAPAS. C2H2-type zinc fingers lie at residues 706-728 and 734-758; these read YECK…MGYH and FKCN…RNAH.

The protein belongs to the hunchback C2H2-type zinc-finger protein family.

It localises to the nucleus. Functionally, gap class segmentation protein that controls development of head structures. The chain is Protein hunchback from Drosophila yakuba (Fruit fly).